We begin with the raw amino-acid sequence, 181 residues long: Oligoribonuclease (181 aa).

An Exonuclease domain is found at 8–171; the sequence is LIWIDLEMTG…DDIRESVAEL (164 aa). The active site involves Tyr-129.

The protein belongs to the oligoribonuclease family.

The protein localises to the cytoplasm. In terms of biological role, 3'-to-5' exoribonuclease specific for small oligoribonucleotides. This Yersinia enterocolitica serotype O:8 / biotype 1B (strain NCTC 13174 / 8081) protein is Oligoribonuclease.